The primary structure comprises 217 residues: D-methionine transport system permease protein MetI (217 aa).

Residues 13–204 form the ABC transmembrane type-1 domain; the sequence is VWETLMMTFV…LLVILVYLIQ (192 aa). Helical transmembrane passes span 20–40, 58–78, 81–101, 152–172, and 186–206; these read TFVS…LLYV, GVVN…MIPF, MIVG…VGAA, ITLI…AGGL, and ATVM…IQLS.

This sequence belongs to the binding-protein-dependent transport system permease family. CysTW subfamily.

It is found in the cell inner membrane. Its function is as follows. Part of the binding-protein-dependent transport system for D-methionine and the toxic methionine analog alpha-methyl-methionine. Probably responsible for the translocation of the substrate across the membrane. This Yersinia pestis protein is D-methionine transport system permease protein MetI (metI).